The chain runs to 996 residues: Leucine-rich repeat receptor-like kinase protein THICK TASSEL DWARF1 (996 aa).

The N-terminal stretch at 1 to 26 is a signal peptide; sequence MPPPTFLLGLLLLLLLAAAAPAPASA. LRR repeat units lie at residues 78–103, 104–127, 128–151, 153–178, 180–201, 202–226, 251–275, 276–299, 300–323, 325–349, 351–371, 372–395, 397–419, 420–443, 445–466, 467–490, 491–514, 516–538, 539–562, 563–586, and 587–611; these read TSRV…VALL, DALA…LASM, PALR…PPAA, FPAL…APHA, SLRY…TFGD, LAAL…LSRL, LQSL…LARL, SRLD…LGAL, TSLR…FAAL, NLKL…DFPF, EVLQ…LGRN, GRLK…LCAG, NLQL…LGDC, KTLT…LFDL, QANM…VIAG, DKIG…IGNL, PALQ…IGRL, NLTR…LMGC, ASLG…VTSL, KILC…MANM, and TSLT…QFLV. A helical transmembrane segment spans residues 646-666; it reads KKLLVWLVVLLTLLVLAVLGA. The 276-residue stretch at 703 to 978 folds into the Protein kinase domain; it reads LKEDNIIGKG…TMREVVHMLS (276 aa). ATP-binding positions include 709–717 and lysine 731; that span reads IGKGGAGIV. Residue aspartate 828 is the Proton acceptor of the active site.

Belongs to the protein kinase superfamily. Ser/Thr protein kinase family. In terms of tissue distribution, highly expressed in the apex of the vegetative seedlings. Lower expression in young leaves, ears and tassels, embryos and roots. Not expressed in the shoot meristem itself. Detected in the three outermost layers of the inflorescence meristem, and on its flanks at positions of prospective spikelet pair meristems. Not confined to meristematic cells but also detected in primordia of glumes, lemmas and stamens.

The protein localises to the membrane. It carries out the reaction L-seryl-[protein] + ATP = O-phospho-L-seryl-[protein] + ADP + H(+). The enzyme catalyses L-threonyl-[protein] + ATP = O-phospho-L-threonyl-[protein] + ADP + H(+). In terms of biological role, receptor-like kinase protein that regulates meristem size during inflorescence and flower development. Promotes vegetative meristem growth and restricts inflorescence and floral meristem growth. Based on additive and synergistic phenotypes of double mutants, it is probable that unlike CLV1 and CLV2 in A.thaliana, TD1 and FAE2 do not function exclusively in a single pathway. However, KN-1 and TD1 do function in a linear pathway to maintain vegetative meristem homeostasis, but they may interact with different partners during development. This is Leucine-rich repeat receptor-like kinase protein THICK TASSEL DWARF1 (TD1) from Zea mays (Maize).